The chain runs to 374 residues: Putative clathrin assembly protein At1g33340 (374 aa).

The region spanning 30 to 163 (YNEKAFFDIE…GWIINQAGKL (134 aa)) is the ENTH domain.

It is found in the membrane. Its subcellular location is the clathrin-coated pit. It localises to the golgi apparatus. The protein localises to the cytoplasmic vesicle. The protein resides in the clathrin-coated vesicle. The chain is Putative clathrin assembly protein At1g33340 from Arabidopsis thaliana (Mouse-ear cress).